The primary structure comprises 221 residues: UPF0319 protein NTHI1987 (221 aa).

The N-terminal stretch at Met1 to Ala21 is a signal peptide.

Belongs to the UPF0319 family.

This is UPF0319 protein NTHI1987 from Haemophilus influenzae (strain 86-028NP).